The sequence spans 428 residues: D-inositol 3-phosphate glycosyltransferase (428 aa).

H17 contributes to the 1D-myo-inositol 3-phosphate binding site. Residues 23–24 and G31 contribute to the UDP-N-acetyl-alpha-D-glucosamine site; that span reads QP. 1D-myo-inositol 3-phosphate-binding positions include 28–33, R86, Y119, T143, and R163; that span reads DAGGMN. UDP-N-acetyl-alpha-D-glucosamine-binding residues include R237 and K242. Residues Y312, R313, and A315 each coordinate Mg(2+). UDP-N-acetyl-alpha-D-glucosamine-binding residues include E325 and E333. T339 is a Mg(2+) binding site.

It belongs to the glycosyltransferase group 1 family. MshA subfamily. As to quaternary structure, homodimer.

The catalysed reaction is 1D-myo-inositol 3-phosphate + UDP-N-acetyl-alpha-D-glucosamine = 1D-myo-inositol 2-acetamido-2-deoxy-alpha-D-glucopyranoside 3-phosphate + UDP + H(+). Its function is as follows. Catalyzes the transfer of a N-acetyl-glucosamine moiety to 1D-myo-inositol 3-phosphate to produce 1D-myo-inositol 2-acetamido-2-deoxy-glucopyranoside 3-phosphate in the mycothiol biosynthesis pathway. The sequence is that of D-inositol 3-phosphate glycosyltransferase from Thermobispora bispora (strain ATCC 19993 / DSM 43833 / CBS 139.67 / JCM 10125 / KCTC 9307 / NBRC 14880 / R51).